A 217-amino-acid chain; its full sequence is GrpE protein homolog 1, mitochondrial (217 aa).

The transit peptide at 1–27 (MAARCVRLARGSLPAFALSLRSSPRLL) directs the protein to the mitochondrion. Lys94 carries the N6-acetyllysine; alternate modification. At Lys94 the chain carries N6-succinyllysine; alternate. Lys100 carries the post-translational modification N6-acetyllysine. N6-succinyllysine is present on Lys120. Lys215 carries the N6-acetyllysine; alternate modification. Lys215 bears the N6-succinyllysine; alternate mark.

It belongs to the GrpE family. As to quaternary structure, probable component of the PAM complex at least composed of a mitochondrial HSP70 protein, GRPEL1 or GRPEL2, TIMM44, TIMM16/PAM16 and TIMM14/DNAJC19. Binds to HSP70, HSC70 and HSJ1B.

Its subcellular location is the mitochondrion matrix. In terms of biological role, essential component of the PAM complex, a complex required for the translocation of transit peptide-containing proteins from the inner membrane into the mitochondrial matrix in an ATP-dependent manner. Seems to control the nucleotide-dependent binding of mitochondrial HSP70 to substrate proteins. The protein is GrpE protein homolog 1, mitochondrial (GRPEL1) of Bos taurus (Bovine).